The following is a 241-amino-acid chain: Carboxy-S-adenosyl-L-methionine synthase (241 aa).

S-adenosyl-L-methionine-binding positions include tyrosine 38, 63–65, 88–89, 116–117, asparagine 131, and arginine 198; these read GCS, DN, and DI.

This sequence belongs to the class I-like SAM-binding methyltransferase superfamily. Cx-SAM synthase family. In terms of assembly, homodimer.

It carries out the reaction prephenate + S-adenosyl-L-methionine = carboxy-S-adenosyl-L-methionine + 3-phenylpyruvate + H2O. Catalyzes the conversion of S-adenosyl-L-methionine (SAM) to carboxy-S-adenosyl-L-methionine (Cx-SAM). The chain is Carboxy-S-adenosyl-L-methionine synthase from Actinobacillus pleuropneumoniae serotype 5b (strain L20).